The chain runs to 141 residues: Small ribosomal subunit protein bS6 (141 aa).

The tract at residues 96–141 (VTGPSAMMKTVEREEFRKASQAGNQTTAPAASPADHAAAPASADRS) is disordered. Residues 123–141 (APAASPADHAAAPASADRS) are compositionally biased toward low complexity.

It belongs to the bacterial ribosomal protein bS6 family.

In terms of biological role, binds together with bS18 to 16S ribosomal RNA. The sequence is that of Small ribosomal subunit protein bS6 from Verminephrobacter eiseniae (strain EF01-2).